The chain runs to 273 residues: Mitochondrial distribution and morphology protein 12 (273 aa).

The SMP-LTD domain maps to 1 to 273; that stretch reads MSIDFDWSKL…LVWPSYITIE (273 aa). The tract at residues 124 to 145 is disordered; it reads LTSPIPESRPSTPMDNHQERDR.

It belongs to the MDM12 family. As to quaternary structure, component of the ER-mitochondria encounter structure (ERMES) or MDM complex, composed of mmm1, mdm10, mdm12 and mdm34. A mmm1 homodimer associates with one molecule of mdm12 on each side in a pairwise head-to-tail manner, and the SMP-LTD domains of mmm1 and mdm12 generate a continuous hydrophobic tunnel for phospholipid trafficking.

It localises to the mitochondrion outer membrane. Its subcellular location is the endoplasmic reticulum membrane. Functionally, component of the ERMES/MDM complex, which serves as a molecular tether to connect the endoplasmic reticulum (ER) and mitochondria. Components of this complex are involved in the control of mitochondrial shape and protein biogenesis, and function in nonvesicular lipid trafficking between the ER and mitochondria. Mdm12 is required for the interaction of the ER-resident membrane protein mmm1 and the outer mitochondrial membrane-resident beta-barrel protein mdm10. The mdm12-mmm1 subcomplex functions in the major beta-barrel assembly pathway that is responsible for biogenesis of all mitochondrial outer membrane beta-barrel proteins, and acts in a late step after the SAM complex. The mdm10-mdm12-mmm1 subcomplex further acts in the TOM40-specific pathway after the action of the mdm12-mmm1 complex. Essential for establishing and maintaining the structure of mitochondria and maintenance of mtDNA nucleoids. The polypeptide is Mitochondrial distribution and morphology protein 12 (Schizosaccharomyces pombe (strain 972 / ATCC 24843) (Fission yeast)).